The following is a 100-amino-acid chain: Integration host factor subunit alpha (100 aa).

A disordered region spans residues 54–73 (DLRDKRQRPGRNPKTGEEIP).

This sequence belongs to the bacterial histone-like protein family. In terms of assembly, heterodimer of an alpha and a beta chain.

In terms of biological role, this protein is one of the two subunits of integration host factor, a specific DNA-binding protein that functions in genetic recombination as well as in transcriptional and translational control. The protein is Integration host factor subunit alpha of Pseudomonas aeruginosa (strain UCBPP-PA14).